A 101-amino-acid chain; its full sequence is Small ribosomal subunit protein uS14 (101 aa).

Belongs to the universal ribosomal protein uS14 family. As to quaternary structure, part of the 30S ribosomal subunit. Contacts proteins S3 and S10.

Functionally, binds 16S rRNA, required for the assembly of 30S particles and may also be responsible for determining the conformation of the 16S rRNA at the A site. This is Small ribosomal subunit protein uS14 from Shewanella putrefaciens (strain CN-32 / ATCC BAA-453).